The sequence spans 93 residues: Large ribosomal subunit protein uL23 (93 aa).

This sequence belongs to the universal ribosomal protein uL23 family. Part of the 50S ribosomal subunit. Contacts protein L29, and trigger factor when it is bound to the ribosome.

Its function is as follows. One of the early assembly proteins it binds 23S rRNA. One of the proteins that surrounds the polypeptide exit tunnel on the outside of the ribosome. Forms the main docking site for trigger factor binding to the ribosome. The chain is Large ribosomal subunit protein uL23 from Campylobacter curvus (strain 525.92).